Consider the following 78-residue polypeptide: Large ribosomal subunit protein bL28 (78 aa).

It belongs to the bacterial ribosomal protein bL28 family.

The sequence is that of Large ribosomal subunit protein bL28 from Proteus mirabilis (strain HI4320).